The sequence spans 115 residues: Aspartate 1-decarboxylase (115 aa).

Ser-24 acts as the Schiff-base intermediate with substrate; via pyruvic acid in catalysis. Residue Ser-24 is modified to Pyruvic acid (Ser). Thr-56 is a substrate binding site. Tyr-57 serves as the catalytic Proton donor. Position 72–74 (72–74 (GAA)) interacts with substrate.

Belongs to the PanD family. In terms of assembly, heterooctamer of four alpha and four beta subunits. Requires pyruvate as cofactor. Is synthesized initially as an inactive proenzyme, which is activated by self-cleavage at a specific serine bond to produce a beta-subunit with a hydroxyl group at its C-terminus and an alpha-subunit with a pyruvoyl group at its N-terminus.

The protein localises to the cytoplasm. The catalysed reaction is L-aspartate + H(+) = beta-alanine + CO2. It functions in the pathway cofactor biosynthesis; (R)-pantothenate biosynthesis; beta-alanine from L-aspartate: step 1/1. Its function is as follows. Catalyzes the pyruvoyl-dependent decarboxylation of aspartate to produce beta-alanine. The sequence is that of Aspartate 1-decarboxylase from Pseudothermotoga lettingae (strain ATCC BAA-301 / DSM 14385 / NBRC 107922 / TMO) (Thermotoga lettingae).